The sequence spans 147 residues: Myoglobin (147 aa).

In terms of domain architecture, Globin spans 2–141 (ADHDLVLKCW…VIGDIDGYYK (140 aa)). Histidine 60 contributes to the nitrite binding site. Position 60 (histidine 60) interacts with O2. Histidine 89 provides a ligand contact to heme b.

This sequence belongs to the globin family. Monomeric.

The protein resides in the cytoplasm. It localises to the sarcoplasm. It carries out the reaction Fe(III)-heme b-[protein] + nitric oxide + H2O = Fe(II)-heme b-[protein] + nitrite + 2 H(+). The enzyme catalyses H2O2 + AH2 = A + 2 H2O. Monomeric heme protein which primary function is to store oxygen and facilitate its diffusion within muscle tissues. Reversibly binds oxygen through a pentacoordinated heme iron and enables its timely and efficient release as needed during periods of heightened demand. Depending on the oxidative conditions of tissues and cells, and in addition to its ability to bind oxygen, it also has a nitrite reductase activity whereby it regulates the production of bioactive nitric oxide. Under stress conditions, like hypoxia and anoxia, it also protects cells against reactive oxygen species thanks to its pseudoperoxidase activity. This is Myoglobin (mb) from Danio rerio (Zebrafish).